A 430-amino-acid polypeptide reads, in one-letter code: Tektin-2 (430 aa).

Coiled coils occupy residues 80–162 (KCLT…FEQL) and 225–382 (NKDR…CKAN).

This sequence belongs to the tektin family. In terms of assembly, microtubule inner protein component of sperm flagellar doublet microtubules. May interact with CCDC172. In terms of processing, tyrosine phosphorylated. Ubiquitinated, leading to its degradation. Deubiquitinated by USP16, promoting its stability. Expressed at high levels in testis, trachea and fetal lung, and at lower levels in ovary, pituitary, adult lung, fetal brain and fetal kidney.

Its subcellular location is the cytoplasm. The protein resides in the cytoskeleton. It localises to the cilium axoneme. The protein localises to the flagellum axoneme. It is found in the microtubule organizing center. Its function is as follows. Microtubule inner protein (MIP) part of the dynein-decorated doublet microtubules (DMTs) in cilia and flagellar axoneme. Plays a key role in the assembly or attachment of the inner dynein arm to microtubules in sperm flagella and tracheal cilia. Forms filamentous polymers in the walls of ciliary and flagellar microtubules. The protein is Tektin-2 of Homo sapiens (Human).